Here is a 595-residue protein sequence, read N- to C-terminus: Protein halfway (595 aa).

2 disordered regions span residues 1–42 and 64–98; these read MLLT…ADDE and TGAA…PLLP. 2 N-linked (GlcNAc...) asparagine glycosylation sites follow: asparagine 250 and asparagine 255. One can recognise an LRRNT domain in the interval 347 to 402; sequence ESTKRCMTKCPVIPNYGSCKCRFESIMIIQDDQSKPKCHVDCSNLGLVELPPRLPD. LRR repeat units lie at residues 403-424, 429-450, and 454-475; these read NTFV…FQTN, NINR…EGTK, and NFQR…FLNN. Residues 489–538 enclose the LRRCT domain; it reads NKLQCDCNSAKTLQNWLKERSTDIPDYMEIRCRNIPQSVIELQEAKLCQS.

Functionally, has a role in the ecdysone induced cascade; probably indirect control of 'late' ecdysone genes. The polypeptide is Protein halfway (hfw) (Drosophila pseudoobscura pseudoobscura (Fruit fly)).